The following is a 219-amino-acid chain: Ribose-5-phosphate isomerase A (219 aa).

Substrate is bound by residues 28 to 31 (SGST), 81 to 84 (DGAD), and 94 to 97 (KGGG). The Proton acceptor role is filled by E103. Residue K121 coordinates substrate.

It belongs to the ribose 5-phosphate isomerase family. In terms of assembly, homodimer.

The enzyme catalyses aldehydo-D-ribose 5-phosphate = D-ribulose 5-phosphate. It functions in the pathway carbohydrate degradation; pentose phosphate pathway; D-ribose 5-phosphate from D-ribulose 5-phosphate (non-oxidative stage): step 1/1. Its function is as follows. Catalyzes the reversible conversion of ribose-5-phosphate to ribulose 5-phosphate. This chain is Ribose-5-phosphate isomerase A, found in Pasteurella multocida (strain Pm70).